The sequence spans 245 residues: Phycocyanobilin:ferredoxin oxidoreductase (245 aa).

This sequence belongs to the HY2 family.

It catalyses the reaction (2R,3Z)-phycocyanobilin + 4 oxidized [2Fe-2S]-[ferredoxin] = biliverdin IXalpha + 4 reduced [2Fe-2S]-[ferredoxin] + 4 H(+). Its function is as follows. Catalyzes the four-electron reduction of biliverdin IX-alpha (2-electron reduction at both the A and D rings); the reaction proceeds via an isolatable 2-electron intermediate, 181,182-dihydrobiliverdin. Upon overexpression in E.coli with PCB:ferredoxin oxidoreductase, CpeS and either CpcB or PecB permits synthesis of phycocyanin-coupled CpcB or PecB. This chain is Phycocyanobilin:ferredoxin oxidoreductase (pcyA), found in Nostoc sp. (strain PCC 7120 / SAG 25.82 / UTEX 2576).